A 107-amino-acid polypeptide reads, in one-letter code: uncharacterized protein (107 aa).

Transmembrane regions (helical) follow at residues 9–28 (FLVFISFFIILLGILDLIME), 33–50 (SYIIILVGLASLFASLNI), 55–72 (LAIAVCIAAAVFIEAIHV), and 77–99 (YRVILYAIGSLPLIISVGSYLKG).

The protein localises to the cell membrane. This is an uncharacterized protein from Archaeoglobus fulgidus (strain ATCC 49558 / DSM 4304 / JCM 9628 / NBRC 100126 / VC-16).